A 193-amino-acid chain; its full sequence is GTP cyclohydrolase 1 (193 aa).

3 residues coordinate Zn(2+): Cys73, His76, and Cys144.

This sequence belongs to the GTP cyclohydrolase I family. Homomer.

It catalyses the reaction GTP + H2O = 7,8-dihydroneopterin 3'-triphosphate + formate + H(+). It functions in the pathway cofactor biosynthesis; 7,8-dihydroneopterin triphosphate biosynthesis; 7,8-dihydroneopterin triphosphate from GTP: step 1/1. The chain is GTP cyclohydrolase 1 from Hyperthermus butylicus (strain DSM 5456 / JCM 9403 / PLM1-5).